Consider the following 365-residue polypeptide: tRNA(Met) cytidine acetate ligase (365 aa).

ATP-binding positions include 7-20, Gly96, Asn152, and Arg175; that span reads IAEF…HKYL.

This sequence belongs to the TmcAL family.

It is found in the cytoplasm. It catalyses the reaction cytidine(34) in elongator tRNA(Met) + acetate + ATP = N(4)-acetylcytidine(34) in elongator tRNA(Met) + AMP + diphosphate. In terms of biological role, catalyzes the formation of N(4)-acetylcytidine (ac(4)C) at the wobble position of elongator tRNA(Met), using acetate and ATP as substrates. First activates an acetate ion to form acetyladenylate (Ac-AMP) and then transfers the acetyl group to tRNA to form ac(4)C34. This is tRNA(Met) cytidine acetate ligase from Streptococcus pneumoniae (strain JJA).